Here is a 227-residue protein sequence, read N- to C-terminus: UPF0173 metal-dependent hydrolase BALH_4194 (227 aa).

The protein belongs to the UPF0173 family.

This Bacillus thuringiensis (strain Al Hakam) protein is UPF0173 metal-dependent hydrolase BALH_4194.